A 238-amino-acid polypeptide reads, in one-letter code: DNA repair protein RecO (238 aa).

The protein belongs to the RecO family.

Functionally, involved in DNA repair and RecF pathway recombination. The polypeptide is DNA repair protein RecO (Anaplasma marginale (strain Florida)).